Here is a 300-residue protein sequence, read N- to C-terminus: Phosphatidylserine decarboxylase proenzyme (300 aa).

Active-site charge relay system; for autoendoproteolytic cleavage activity residues include D113, H169, and S256. S256 serves as the catalytic Schiff-base intermediate with substrate; via pyruvic acid; for decarboxylase activity. The residue at position 256 (S256) is a Pyruvic acid (Ser); by autocatalysis.

The protein belongs to the phosphatidylserine decarboxylase family. PSD-B subfamily. Prokaryotic type II sub-subfamily. In terms of assembly, heterodimer of a large membrane-associated beta subunit and a small pyruvoyl-containing alpha subunit. The cofactor is pyruvate. In terms of processing, is synthesized initially as an inactive proenzyme. Formation of the active enzyme involves a self-maturation process in which the active site pyruvoyl group is generated from an internal serine residue via an autocatalytic post-translational modification. Two non-identical subunits are generated from the proenzyme in this reaction, and the pyruvate is formed at the N-terminus of the alpha chain, which is derived from the carboxyl end of the proenzyme. The autoendoproteolytic cleavage occurs by a canonical serine protease mechanism, in which the side chain hydroxyl group of the serine supplies its oxygen atom to form the C-terminus of the beta chain, while the remainder of the serine residue undergoes an oxidative deamination to produce ammonia and the pyruvoyl prosthetic group on the alpha chain. During this reaction, the Ser that is part of the protease active site of the proenzyme becomes the pyruvoyl prosthetic group, which constitutes an essential element of the active site of the mature decarboxylase.

Its subcellular location is the cell membrane. It catalyses the reaction a 1,2-diacyl-sn-glycero-3-phospho-L-serine + H(+) = a 1,2-diacyl-sn-glycero-3-phosphoethanolamine + CO2. The protein operates within phospholipid metabolism; phosphatidylethanolamine biosynthesis; phosphatidylethanolamine from CDP-diacylglycerol: step 2/2. Its function is as follows. Catalyzes the formation of phosphatidylethanolamine (PtdEtn) from phosphatidylserine (PtdSer). This Ruminiclostridium cellulolyticum (strain ATCC 35319 / DSM 5812 / JCM 6584 / H10) (Clostridium cellulolyticum) protein is Phosphatidylserine decarboxylase proenzyme.